The sequence spans 89 residues: Small ribosomal subunit protein uS17 (89 aa).

It belongs to the universal ribosomal protein uS17 family. Part of the 30S ribosomal subunit.

Functionally, one of the primary rRNA binding proteins, it binds specifically to the 5'-end of 16S ribosomal RNA. This Ralstonia pickettii (strain 12J) protein is Small ribosomal subunit protein uS17.